Consider the following 60-residue polypeptide: DNA-directed RNA polymerase subunit Rpo6 (60 aa).

This sequence belongs to the archaeal Rpo6/eukaryotic RPB6 RNA polymerase subunit family. In terms of assembly, part of the RNA polymerase complex.

It is found in the cytoplasm. It carries out the reaction RNA(n) + a ribonucleoside 5'-triphosphate = RNA(n+1) + diphosphate. Its function is as follows. DNA-dependent RNA polymerase (RNAP) catalyzes the transcription of DNA into RNA using the four ribonucleoside triphosphates as substrates. The chain is DNA-directed RNA polymerase subunit Rpo6 from Halobacterium salinarum (strain ATCC 700922 / JCM 11081 / NRC-1) (Halobacterium halobium).